Consider the following 438-residue polypeptide: Delta(14)-sterol reductase ERG24 (438 aa).

Topologically, residues 1–13 (MVSALNPRTTEFE) are lumenal. A helical membrane pass occupies residues 14–34 (FGGLIGALGISIGLPVFTIIL). The Cytoplasmic segment spans residues 35-71 (NQMIRPDYFIKGFFQNFDIVELWNGIKPLRYYLGNRE). Residues 72 to 90 (LWTVYCLWYGILAVLDVIL) traverse the membrane as a helical segment. Over 91 to 109 (PGRVMKGVQLRDGSKLSYK) the chain is Lumenal. Residues 110–127 (INGIAMSTTLVLVLAIRW) traverse the membrane as a helical segment. Over 128–147 (KLTDGQLPELQYLYENHVSL) the chain is Cytoplasmic. The chain crosses the membrane as a helical span at residues 148-172 (CIISILFSFFLATYCYVASFIPLIF). The Lumenal portion of the chain corresponds to 173–242 (KKNGNGKREK…LHHHYLKTGK (70 aa)). A helical transmembrane segment spans residues 243–263 (INDALVLVNFLQGFYIFDGVL). Over 264 to 308 (NEEGVLTMMDITTDGFGFMLAFGDLSLVPFTYSLQARYLSVSPVE) the chain is Cytoplasmic. The helical transmembrane segment at 309-328 (LGWVKVVGILAIMFLGFHIF) threads the bilayer. At 329–368 (HSANKQKSEFRQGKLENLKSIQTKRGTKLLCDGWWAKSQH) the chain is on the lumenal side. NADP(+) contacts are provided by residues K335, R339, L358, W363, 370–371 (NY), D410, 414–418 (CRLKY), and Y425. A helical membrane pass occupies residues 369–387 (INYFGDWLISLSWCLATWF). Residues 388–438 (QTPLTYYYSLYFATLLLHRQQRDEHKCRLKYGENWEEYERKVPYKIIPYVY) lie on the Cytoplasmic side of the membrane.

It belongs to the ERG4/ERG24 family.

Its subcellular location is the membrane. The enzyme catalyses 4,4-dimethyl-5alpha-cholesta-8,24-dien-3beta-ol + NADP(+) = 4,4-dimethyl-5alpha-cholesta-8,14,24-trien-3beta-ol + NADPH + H(+). The protein operates within steroid biosynthesis; zymosterol biosynthesis; zymosterol from lanosterol: step 2/6. With respect to regulation, inhibited by the morpholine antifungal drug fenpropimorph. In terms of biological role, delta(14)-sterol reductase; part of the third module of ergosterol biosynthesis pathway that includes the late steps of the pathway. ERG24 reduces the C14=C15 double bond of 4,4-dimethyl-cholesta-8,14,24-trienol to produce 4,4-dimethyl-cholesta-8,24-dienol. The third module or late pathway involves the ergosterol synthesis itself through consecutive reactions that mainly occur in the endoplasmic reticulum (ER) membrane. Firstly, the squalene synthase ERG9 catalyzes the condensation of 2 farnesyl pyrophosphate moieties to form squalene, which is the precursor of all steroids. Squalene synthase is crucial for balancing the incorporation of farnesyl diphosphate (FPP) into sterol and nonsterol isoprene synthesis. Secondly, the squalene epoxidase ERG1 catalyzes the stereospecific oxidation of squalene to (S)-2,3-epoxysqualene, which is considered to be a rate-limiting enzyme in steroid biosynthesis. Then, the lanosterol synthase ERG7 catalyzes the cyclization of (S)-2,3 oxidosqualene to lanosterol, a reaction that forms the sterol core. In the next steps, lanosterol is transformed to zymosterol through a complex process involving various demethylation, reduction and desaturation reactions. The lanosterol 14-alpha-demethylase ERG11 (also known as CYP51) catalyzes C14-demethylation of lanosterol to produce 4,4'-dimethyl cholesta-8,14,24-triene-3-beta-ol, which is critical for ergosterol biosynthesis. The C-14 reductase ERG24 reduces the C14=C15 double bond of 4,4-dimethyl-cholesta-8,14,24-trienol to produce 4,4-dimethyl-cholesta-8,24-dienol. 4,4-dimethyl-cholesta-8,24-dienol is substrate of the C-4 demethylation complex ERG25-ERG26-ERG27 in which ERG25 catalyzes the three-step monooxygenation required for the demethylation of 4,4-dimethyl and 4alpha-methylsterols, ERG26 catalyzes the oxidative decarboxylation that results in a reduction of the 3-beta-hydroxy group at the C-3 carbon to an oxo group, and ERG27 is responsible for the reduction of the keto group on the C-3. ERG28 has a role as a scaffold to help anchor ERG25, ERG26 and ERG27 to the endoplasmic reticulum and ERG29 regulates the activity of the iron-containing C4-methylsterol oxidase ERG25. Then, the sterol 24-C-methyltransferase ERG6 catalyzes the methyl transfer from S-adenosyl-methionine to the C-24 of zymosterol to form fecosterol. The C-8 sterol isomerase ERG2 catalyzes the reaction which results in unsaturation at C-7 in the B ring of sterols and thus converts fecosterol to episterol. The sterol-C5-desaturase ERG3 then catalyzes the introduction of a C-5 double bond in the B ring to produce 5-dehydroepisterol. The C-22 sterol desaturase ERG5 further converts 5-dehydroepisterol into ergosta-5,7,22,24(28)-tetraen-3beta-ol by forming the C-22(23) double bond in the sterol side chain. Finally, ergosta-5,7,22,24(28)-tetraen-3beta-ol is substrate of the C-24(28) sterol reductase ERG4 to produce ergosterol. The polypeptide is Delta(14)-sterol reductase ERG24 (Saccharomyces cerevisiae (strain ATCC 204508 / S288c) (Baker's yeast)).